The sequence spans 640 residues: MLSVLHKLKELRILSQGDYYFAKLIADKQCHTDYAEPVKNLAILLAALCSWRYTQGNTCSQLDRYLEHNLFGLAYRTTEEDYLAEIHEKIGYLPVEDWQNALCGHMAFTQDPVNQIAPMAFQFGALYFYRAWQDEYRIVQYIKNTLKKYRTLAFSYDEIHQKLEKYFPEKQEKTDWQKVAVATAIKSPFSIITGGPGTGKTTTVTRLLLVLQELFDCKLHIKLVAPTGKAASRLEESIKNALGFMQEKMNVSHSLFNAIPQKASTLHSLLGVNAFNDYTRYNSHNPLQLDVLVVDETSMIDLPMMAKLINALKPETRLILLGDQAQLASVEAGAVLGELAQFVTQPYSHEQAAYLLATTGYKVEGSDCSNPIRDCLCHLTESRRFDKDSGIGKLSEFIQKGKADDSLELFDHYPQELHFNSLNDEGDAVNQVVKSAVENYRTFLKMLDDLRKQKIDPNAKNEQGISYAEAIQVQFNSVRFLTALRNNNLGVENLNKEIALALREQKLLWFRNEQDWYIGKPIMITENDHNVRLYNGDIGLCLANGKVWFGNREVLTNRIPAHEPAFMMTIHKSQGSEFKHTVMVLPTEVNPVLSRELVFTGVTRAKKELTVFADEKIWKTAIRQTVKRQSGLGKLLEDLN.

194–201 lines the ATP pocket; sequence GGPGTGKT.

Belongs to the RecD family. In terms of assembly, heterotrimer of RecB, RecC and RecD. All subunits contribute to DNA-binding.

The catalysed reaction is Couples ATP hydrolysis with the unwinding of duplex DNA at the replication fork by translocating in the 5'-3' direction. This creates two antiparallel DNA single strands (ssDNA). The leading ssDNA polymer is the template for DNA polymerase III holoenzyme which synthesizes a continuous strand.. The enzyme catalyses ATP + H2O = ADP + phosphate + H(+). Functionally, a helicase/nuclease that prepares dsDNA breaks (DSB) for recombinational DNA repair. Binds to DSBs and unwinds DNA via a highly rapid and processive ATP-dependent bidirectional helicase activity. Unwinds dsDNA until it encounters a Chi (crossover hotspot instigator) sequence from the 3' direction. Cuts ssDNA a few nucleotides 3' to the Chi site. The properties and activities of the enzyme are changed at Chi. The Chi-altered holoenzyme produces a long 3'-ssDNA overhang and facilitates RecA-binding to the ssDNA for homologous DNA recombination and repair. Holoenzyme degrades any linearized DNA that is unable to undergo homologous recombination. In the holoenzyme this subunit has ssDNA-dependent ATPase and 5'-3' helicase activity. When added to pre-assembled RecBC greatly stimulates nuclease activity and augments holoenzyme processivity. Negatively regulates the RecA-loading ability of RecBCD. The protein is RecBCD enzyme subunit RecD of Haemophilus influenzae (strain ATCC 51907 / DSM 11121 / KW20 / Rd).